A 194-amino-acid polypeptide reads, in one-letter code: uncharacterized protein (194 aa).

This is an uncharacterized protein from Methanocaldococcus jannaschii (strain ATCC 43067 / DSM 2661 / JAL-1 / JCM 10045 / NBRC 100440) (Methanococcus jannaschii).